The chain runs to 201 residues: Holliday junction resolvase RecU (201 aa).

Mg(2+) contacts are provided by Thr85, Asp87, Asp100, and Gln119.

This sequence belongs to the RecU family. Mg(2+) serves as cofactor.

It localises to the cytoplasm. It carries out the reaction Endonucleolytic cleavage at a junction such as a reciprocal single-stranded crossover between two homologous DNA duplexes (Holliday junction).. Functionally, endonuclease that resolves Holliday junction intermediates in genetic recombination. Cleaves mobile four-strand junctions by introducing symmetrical nicks in paired strands. Promotes annealing of linear ssDNA with homologous dsDNA. Required for DNA repair, homologous recombination and chromosome segregation. The polypeptide is Holliday junction resolvase RecU (Pediococcus pentosaceus (strain ATCC 25745 / CCUG 21536 / LMG 10740 / 183-1w)).